A 256-amino-acid chain; its full sequence is Polycomb group RING finger protein 5 (256 aa).

The segment at 18–57 (CYICKGYLIKPTTVTECLHTFCKTCIVQHFEDSNDCPRCG) adopts an RING-type zinc-finger fold. Basic and acidic residues-rich tracts occupy residues 94–103 (ESEFWKKNKP) and 110–120 (DTSKADKPKVD). The interval 94-133 (ESEFWKKNKPQENGQDDTSKADKPKVDEEGDENEDDKDYH) is disordered.

In terms of assembly, component of a PRC1-like complex that contains PCGF5, RNF2 and UBE2D3. Interacts with RNF2; the interaction is direct. Interacts with CBX6, CBX7 and CBX8. Interacts with AUTS2; the interaction is direct. Identified in a complex that contains AUTS2, PCGF5, CSNK2B and RNF2.

The protein resides in the nucleus. It is found in the nucleoplasm. Functionally, component of a Polycomb group (PcG) multiprotein PRC1-like complex, a complex class required to maintain the transcriptionally repressive state of many genes, including Hox genes, throughout development. PcG PRC1 complex acts via chromatin remodeling and modification of histones; it mediates monoubiquitination of histone H2A 'Lys-119', rendering chromatin heritably changed in its expressibility. Within the PRC1-like complex, regulates RNF2 ubiquitin ligase activity. Plays a redundant role with PCGF3 as part of a PRC1-like complex that mediates monoubiquitination of histone H2A 'Lys-119' on the X chromosome and is required for normal silencing of one copy of the X chromosome in XX females. This chain is Polycomb group RING finger protein 5 (PCGF5), found in Homo sapiens (Human).